Here is a 357-residue protein sequence, read N- to C-terminus: Cell division control protein 10 (357 aa).

One can recognise a Septin-type G domain in the interval 34 to 306 (RGFQFNIMVV…ETFRSKQLIA (273 aa)). The segment at 44–51 (GRSGLGKS) is G1 motif. Residues 44-51 (GRSGLGKS), threonine 78, glycine 104, 184-192 (KSDSLTLDE), glycine 240, and arginine 255 each bind GTP. The interval 101–104 (DTPG) is G3 motif. Positions 183–186 (AKSD) are G4 motif. Residues 310–357 (NASNPNRQSQLQKDQGQTSQQSNQDLKNTSGVPNAPMFQSTTGTAAAR) form a disordered region.

The protein belongs to the TRAFAC class TrmE-Era-EngA-EngB-Septin-like GTPase superfamily. Septin GTPase family.

The protein localises to the bud neck. In terms of biological role, plays a role in the cell cycle. Involved in the formation of the ring of filaments in the neck region at the mother-bud junction during mitosis. This Candida albicans (strain SC5314 / ATCC MYA-2876) (Yeast) protein is Cell division control protein 10 (CDC10).